The primary structure comprises 89 residues: Small ribosomal subunit protein uS15 (89 aa).

It belongs to the universal ribosomal protein uS15 family. As to quaternary structure, part of the 30S ribosomal subunit. Forms a bridge to the 50S subunit in the 70S ribosome, contacting the 23S rRNA.

Functionally, one of the primary rRNA binding proteins, it binds directly to 16S rRNA where it helps nucleate assembly of the platform of the 30S subunit by binding and bridging several RNA helices of the 16S rRNA. Its function is as follows. Forms an intersubunit bridge (bridge B4) with the 23S rRNA of the 50S subunit in the ribosome. The sequence is that of Small ribosomal subunit protein uS15 from Pseudomonas putida (strain ATCC 700007 / DSM 6899 / JCM 31910 / BCRC 17059 / LMG 24140 / F1).